We begin with the raw amino-acid sequence, 450 residues long: MRYLPHTEEEIQEMLEVVGKESLDDLFSSVPAECRYQGDIPIPAALTEWQLKDHFAALMSKNRVNQEHKVLIGAGSYDHYVPEILPSLMSRSEFLTAYTPYQPEVAQGTLQGIFEYQTLTARLLGTDAVNASMYDGASALAESALMSFRIARKKKTVALSAAIHPHYREVVATYLQATDFTIIELPVDAEGRTDLSSLAGIEGLASVAIQSPNFFGVVEDLQGCGEKIHDVDALFISCFSEALAYGLLKSPGECGADIICGEGQSFGLGRSYGGPGVGMMGCRDKLVRNMPGRIVGQTLDTKGKRGFVLTLATREQHIRREKATSNICSNQGICAMTAGMYMATLGGTGIRQLARLNYDKAAYLRSELIKLGAKPLFDAPVFNEFALRFPFDFERVREALKEESVVAGLSLEAYYPDLQGAYLFCATETLKKEDIDRIVSSIKKHALQEV.

This sequence belongs to the GcvP family. N-terminal subunit subfamily. The glycine cleavage system is composed of four proteins: P, T, L and H. In this organism, the P 'protein' is a heterodimer of two subunits.

It carries out the reaction N(6)-[(R)-lipoyl]-L-lysyl-[glycine-cleavage complex H protein] + glycine + H(+) = N(6)-[(R)-S(8)-aminomethyldihydrolipoyl]-L-lysyl-[glycine-cleavage complex H protein] + CO2. Its function is as follows. The glycine cleavage system catalyzes the degradation of glycine. The P protein binds the alpha-amino group of glycine through its pyridoxal phosphate cofactor; CO(2) is released and the remaining methylamine moiety is then transferred to the lipoamide cofactor of the H protein. This is Probable glycine dehydrogenase (decarboxylating) subunit 1 from Desulfotalea psychrophila (strain LSv54 / DSM 12343).